The chain runs to 140 residues: Small ribosomal subunit protein uS12 (140 aa).

The disordered stretch occupies residues 1–20; that stretch reads MPTINQLVRKGRQSKVVKSD. A 3-methylthioaspartic acid modification is found at aspartate 102. The tract at residues 121-140 is disordered; the sequence is DGRMQGRSKYGTKRPKAAKK. A compositionally biased stretch (basic residues) spans 130–140; sequence YGTKRPKAAKK.

Belongs to the universal ribosomal protein uS12 family. Part of the 30S ribosomal subunit. Contacts proteins S8 and S17. May interact with IF1 in the 30S initiation complex.

Its function is as follows. With S4 and S5 plays an important role in translational accuracy. Functionally, interacts with and stabilizes bases of the 16S rRNA that are involved in tRNA selection in the A site and with the mRNA backbone. Located at the interface of the 30S and 50S subunits, it traverses the body of the 30S subunit contacting proteins on the other side and probably holding the rRNA structure together. The combined cluster of proteins S8, S12 and S17 appears to hold together the shoulder and platform of the 30S subunit. This Exiguobacterium sibiricum (strain DSM 17290 / CCUG 55495 / CIP 109462 / JCM 13490 / 255-15) protein is Small ribosomal subunit protein uS12.